Here is a 231-residue protein sequence, read N- to C-terminus: Enolase-phosphatase E1 (231 aa).

It belongs to the HAD-like hydrolase superfamily. MasA/MtnC family. Monomer. The cofactor is Mg(2+).

The catalysed reaction is 5-methylsulfanyl-2,3-dioxopentyl phosphate + H2O = 1,2-dihydroxy-5-(methylsulfanyl)pent-1-en-3-one + phosphate. It functions in the pathway amino-acid biosynthesis; L-methionine biosynthesis via salvage pathway; L-methionine from S-methyl-5-thio-alpha-D-ribose 1-phosphate: step 3/6. It participates in amino-acid biosynthesis; L-methionine biosynthesis via salvage pathway; L-methionine from S-methyl-5-thio-alpha-D-ribose 1-phosphate: step 4/6. Functionally, bifunctional enzyme that catalyzes the enolization of 2,3-diketo-5-methylthiopentyl-1-phosphate (DK-MTP-1-P) into the intermediate 2-hydroxy-3-keto-5-methylthiopentenyl-1-phosphate (HK-MTPenyl-1-P), which is then dephosphorylated to form the acireductone 1,2-dihydroxy-3-keto-5-methylthiopentene (DHK-MTPene). This chain is Enolase-phosphatase E1, found in Stenotrophomonas maltophilia (strain K279a).